The sequence spans 874 residues: Alanine--tRNA ligase (874 aa).

Residues histidine 563, histidine 567, cysteine 665, and histidine 669 each coordinate Zn(2+).

It belongs to the class-II aminoacyl-tRNA synthetase family. It depends on Zn(2+) as a cofactor.

The protein localises to the cytoplasm. It carries out the reaction tRNA(Ala) + L-alanine + ATP = L-alanyl-tRNA(Ala) + AMP + diphosphate. In terms of biological role, catalyzes the attachment of alanine to tRNA(Ala) in a two-step reaction: alanine is first activated by ATP to form Ala-AMP and then transferred to the acceptor end of tRNA(Ala). Also edits incorrectly charged Ser-tRNA(Ala) and Gly-tRNA(Ala) via its editing domain. This chain is Alanine--tRNA ligase, found in Actinobacillus pleuropneumoniae serotype 5b (strain L20).